Here is a 403-residue protein sequence, read N- to C-terminus: S-adenosylmethionine:tRNA ribosyltransferase-isomerase (403 aa).

Belongs to the QueA family. As to quaternary structure, monomer.

The protein resides in the cytoplasm. It catalyses the reaction 7-aminomethyl-7-carbaguanosine(34) in tRNA + S-adenosyl-L-methionine = epoxyqueuosine(34) in tRNA + adenine + L-methionine + 2 H(+). It participates in tRNA modification; tRNA-queuosine biosynthesis. Functionally, transfers and isomerizes the ribose moiety from AdoMet to the 7-aminomethyl group of 7-deazaguanine (preQ1-tRNA) to give epoxyqueuosine (oQ-tRNA). The chain is S-adenosylmethionine:tRNA ribosyltransferase-isomerase from Psychrobacter arcticus (strain DSM 17307 / VKM B-2377 / 273-4).